The following is a 1165-amino-acid chain: Error-prone DNA polymerase (1165 aa).

A disordered region spans residues 1111–1165 (SEGLARPPLPTGADLYEPLTYEPLNGDRRDNPDAPAQRLRHPRDVRILPPSRDFH). A compositionally biased stretch (basic and acidic residues) spans 1152 to 1165 (PRDVRILPPSRDFH).

The protein belongs to the DNA polymerase type-C family. DnaE2 subfamily.

It localises to the cytoplasm. The catalysed reaction is DNA(n) + a 2'-deoxyribonucleoside 5'-triphosphate = DNA(n+1) + diphosphate. Functionally, DNA polymerase involved in damage-induced mutagenesis and translesion synthesis (TLS). It is not the major replicative DNA polymerase. This chain is Error-prone DNA polymerase, found in Rhodopseudomonas palustris (strain HaA2).